Reading from the N-terminus, the 536-residue chain is MRSLLLFTFSACVLLARVLLAGGASSGAGDTRPGSRRRAREALAAQKIEVLVLLPRDDSYLFSLARVRPAIEYALRSVEGNGTGRKLLPPGTRFQVAYEDSDCGNRALFSLVDRVAAARGAKPDLILGPVCEYAAAPVARLASHWDLPMLSAGALAAGFQHKDTEYSHLTRVAPAYAKMGEMMLALFRHHHWSRAALVYSDDKLERNCYFTLEGVHEVFQEEGLHTSAYNFDETKDLDLDDIVRYIQGSERVVIMCASGDTIRRIMLAVHRHGMTSGDYAFFNIELFNSSSYGDGSWRRGDKHDSEAKQAYSSLQTVTLLRTVKPEFEKFSMEVKSSVEKQGLNEEDYVNMFVEGFHDAILLYVLALHEVLRAGYSKKDGGKIIQQTWNRTFEGIAGQVSIDANGDRYGDFSVVAMTDTEAGTQEVIGDYFGKEGRFQMRSNVKYPWGPLKLRLDETRIVEHTNSSPCKSSGGLEESAVTGIVVGALLGAGLLMAFYFFRKKYRITIERRNQQEESNIGKHRELREDSIRSHFSVA.

The first 26 residues, 1-26 (MRSLLLFTFSACVLLARVLLAGGASS), serve as a signal peptide directing secretion. The propeptide occupies 27 to 40 (GAGDTRPGSRRRAR). At 41 to 478 (EALAAQKIEV…KSSGGLEESA (438 aa)) the chain is on the extracellular side. Asn81 is a glycosylation site (N-linked (GlcNAc...) asparagine). Ser101, Val130, and Cys131 together coordinate chloride. 2 cysteine pairs are disulfide-bonded: Cys103/Cys131 and Cys208/Cys256. Asn288 and Asn389 each carry an N-linked (GlcNAc...) asparagine glycan. A helical membrane pass occupies residues 479 to 499 (VTGIVVGALLGAGLLMAFYFF). The Cytoplasmic segment spans residues 500-536 (RKKYRITIERRNQQEESNIGKHRELREDSIRSHFSVA).

It belongs to the ANF receptor family. In terms of assembly, homodimer; disulfide-linked. Interacts with OSTN.

It localises to the cell membrane. Functionally, receptor for the natriuretic peptide hormones, binding with similar affinities atrial natriuretic peptide NPPA/ANP, brain natriuretic peptide NPPB/BNP, and C-type natriuretic peptide NPPC/CNP. May function as a clearance receptor for NPPA, NPPB and NPPC, regulating their local concentrations and effects. Acts as a regulator of osteoblast differentiation and bone growth by binding to its ligand osteocrin, thereby preventing binding between NPR3/NPR-C and natriuretic peptides, leading to increase cGMP production. This is Atrial natriuretic peptide receptor 3 (Npr3) from Mus musculus (Mouse).